The primary structure comprises 944 residues: MVSDRRLLKKFGKIADRIIALEPQMRQLKDEDFLLKTQEFKQMLENGKSLDDILIEVYAVAREAARRVLGLNAYKVQLIGGIILNSGDIAEMRTGEGKTLTGIFPAYLNALTQKGVHIVTVNEYLSRRDSEINGKVFDLLGISVGLNGSSLSKAEKREAYSKDITYTTNAELGFDYLRDNMVSDYSLKVQRKLNYCIIDEADSVLIDEARTPLIISGGTSTRINLYKAANNFALSLKEHDDLDIDLESKQVYLNEQGMKKANEFFSLKNLFAIENTEIFHLIMNALKAQFAFKEGVEYTVRDNEILLIDQFTGRIMHGRSYSDGLQQALQAKENVDIEEETVTLATITYQNFYRLYSKIAGMTGTAKTEEEEFIKIYNTRVIQTPTNKPVIRKDEPDLTFGSKNAALKKLVEDVKETHQKGAPILIGTTSVESSEQIARYLKKANLKFETINAKNHDREAEIVAKAGEIGAITLATNMAGRGTDIKLAKGVSELGGLRVFGVERNEARRIDNQLRGRSGRQGDPGLSRFYISMDDDLMMRFTAPKTRQRFKALGDDYIKSKMFTRAVTNAQKKLEGMNFDQRKNVLDYDNILAQQREIIYAQRDDILEANDLSIVIEKMQITAAYELIEKHSTLVHGEKTINKKELLEVIDGVLVPKNKFRIDDFNNKEKMDLAVEIAEAMMQLYKARISDIPEDVVIGMERKIILDAFDKYWTKHLDIAGKLKSGIYLQQYAQNNPLAIYVEQATDLFNKMKINIANDVVENLSNVILKVVEDEEKREERIEVTDKDIEEILLETGLETSDINNKAINKRFDELEEKFKDDKQKLKRLRIQRDVMLGLVLELERRAEMIVSPENDQLAITQLIKELQNDIDIASITVEQIHQNFNNMVEKINDPEKLKHLVIAKDVLLQLVARMDDIKEQEKQTKKKKKKKPHDDETTKVKIG.

ATP-binding positions include glutamine 77, 95–99, and aspartate 484; that span reads GEGKT. Residues 920–944 form a disordered region; it reads EQEKQTKKKKKKKPHDDETTKVKIG. A compositionally biased stretch (basic and acidic residues) spans 933–944; the sequence is PHDDETTKVKIG.

This sequence belongs to the SecA family. In terms of assembly, monomer and homodimer. Part of the essential Sec protein translocation apparatus which comprises SecA, SecYEG and auxiliary proteins SecDF. Other proteins may also be involved.

The protein localises to the cell membrane. It localises to the cytoplasm. It catalyses the reaction ATP + H2O + cellular proteinSide 1 = ADP + phosphate + cellular proteinSide 2.. Functionally, part of the Sec protein translocase complex. Interacts with the SecYEG preprotein conducting channel. Has a central role in coupling the hydrolysis of ATP to the transfer of proteins into and across the cell membrane, serving as an ATP-driven molecular motor driving the stepwise translocation of polypeptide chains across the membrane. This Mycoplasma capricolum subsp. capricolum (strain California kid / ATCC 27343 / NCTC 10154) protein is Protein translocase subunit SecA.